A 151-amino-acid polypeptide reads, in one-letter code: ATP synthase subunit b' (151 aa).

Residues 18-38 traverse the membrane as a helical segment; that stretch reads TLPLMALQVVLLTFILNALFF.

This sequence belongs to the ATPase B chain family. As to quaternary structure, F-type ATPases have 2 components, F(1) - the catalytic core - and F(0) - the membrane proton channel. F(1) has five subunits: alpha(3), beta(3), gamma(1), delta(1), epsilon(1). F(0) has four main subunits: a(1), b(1), b'(1) and c(10-14). The alpha and beta chains form an alternating ring which encloses part of the gamma chain. F(1) is attached to F(0) by a central stalk formed by the gamma and epsilon chains, while a peripheral stalk is formed by the delta, b and b' chains.

It localises to the cellular thylakoid membrane. In terms of biological role, f(1)F(0) ATP synthase produces ATP from ADP in the presence of a proton or sodium gradient. F-type ATPases consist of two structural domains, F(1) containing the extramembraneous catalytic core and F(0) containing the membrane proton channel, linked together by a central stalk and a peripheral stalk. During catalysis, ATP synthesis in the catalytic domain of F(1) is coupled via a rotary mechanism of the central stalk subunits to proton translocation. Component of the F(0) channel, it forms part of the peripheral stalk, linking F(1) to F(0). The b'-subunit is a diverged and duplicated form of b found in plants and photosynthetic bacteria. This is ATP synthase subunit b' from Prochlorococcus marinus (strain MIT 9303).